The chain runs to 377 residues: Nitric oxide reductase FlRd-NAD(+) reductase (377 aa).

The protein belongs to the FAD-dependent oxidoreductase family. FAD serves as cofactor.

It is found in the cytoplasm. It carries out the reaction 2 reduced [nitric oxide reductase rubredoxin domain] + NAD(+) + H(+) = 2 oxidized [nitric oxide reductase rubredoxin domain] + NADH. Its pathway is nitrogen metabolism; nitric oxide reduction. One of at least two accessory proteins for anaerobic nitric oxide (NO) reductase. Reduces the rubredoxin moiety of NO reductase. The sequence is that of Nitric oxide reductase FlRd-NAD(+) reductase from Escherichia coli (strain 55989 / EAEC).